The sequence spans 301 residues: m7GpppX diphosphatase (301 aa).

Substrate contacts are provided by residues glutamate 154, lysine 176, and 237-248 (HYQPSFYHLHVH). The short motif at 244–248 (HLHVH) is the Histidine triad motif element. Catalysis depends on histidine 246, which acts as the Nucleophile.

This sequence belongs to the HIT family.

It localises to the nucleus. The catalysed reaction is a 5'-end (N(7)-methyl 5'-triphosphoguanosine)-ribonucleoside in mRNA + H2O = N(7)-methyl-GMP + a 5'-end diphospho-ribonucleoside in mRNA + 2 H(+). It carries out the reaction a 5'-end (N(2),N(2),N(7)-trimethyl 5'-triphosphoguanosine)-ribonucleoside in mRNA + H2O = (N(2),N(2),N(7))-trimethyl-GMP + a 5'-end diphospho-ribonucleoside in mRNA + 2 H(+). The hydrolytic product 7-methylguanosine diphosphate (m7GDP) efficiently inhibits the decapping scavenger activity and acts as a competitive inhibitor in vitro. Its function is as follows. Decapping scavenger enzyme that catalyzes the cleavage of a residual cap structure following the degradation of mRNAs of the 3'-&gt;5' exosome-mediated mRNA decay pathway. Hydrolyzes cap analog structures like 7-methylguanosine nucleoside triphosphate (m7GpppG) and tri-methyl guanosine nucleoside triphosphate (m3(2,2,7)GpppG) with up to 2 nucleotide substrates (small capped oligoribonucleotides) and specifically releases 5'-phosphorylated RNA fragments and 7-methylguanosine monophosphate (m7GMP). Does not hydrolyze unmethylated cap analog (GpppG) and shows no decapping activity on intact m7GpppG-capped mRNA molecules. Does not hydrolyze 7-methylguanosine diphosphate (m7GDP) and tri-methylguanosine diphosphate (m3(2,2,7)GDP) to m(7)GMP and m3(2,2,7)GMP, respectively. May also play a role in the 5'-&gt;3 mRNA decay pathway; m7GDP, the downstream product released by the 5'-&gt;3' mRNA mediated decapping activity, may be also converted by dcs-1 to m7GMP. Binds to m7GpppG and strongly to m7GDP. This Ascaris suum (Pig roundworm) protein is m7GpppX diphosphatase.